The chain runs to 236 residues: Purine nucleoside phosphorylase DeoD-type (236 aa).

His-5 contacts a purine D-ribonucleoside. Phosphate is bound by residues Gly-21, Arg-25, Arg-44, and 88–91 (RIGS). Residues 180–182 (EME) and 204–205 (SD) contribute to the a purine D-ribonucleoside site. Catalysis depends on Asp-205, which acts as the Proton donor.

Belongs to the PNP/UDP phosphorylase family. In terms of assembly, homohexamer; trimer of homodimers.

The enzyme catalyses a purine D-ribonucleoside + phosphate = a purine nucleobase + alpha-D-ribose 1-phosphate. It carries out the reaction a purine 2'-deoxy-D-ribonucleoside + phosphate = a purine nucleobase + 2-deoxy-alpha-D-ribose 1-phosphate. Functionally, catalyzes the reversible phosphorolytic breakdown of the N-glycosidic bond in the beta-(deoxy)ribonucleoside molecules, with the formation of the corresponding free purine bases and pentose-1-phosphate. The chain is Purine nucleoside phosphorylase DeoD-type from Hahella chejuensis (strain KCTC 2396).